A 339-amino-acid polypeptide reads, in one-letter code: Tetraacyldisaccharide 4'-kinase (339 aa).

62-69 (VAGGTGKT) provides a ligand contact to ATP.

Belongs to the LpxK family.

The catalysed reaction is a lipid A disaccharide + ATP = a lipid IVA + ADP + H(+). It functions in the pathway glycolipid biosynthesis; lipid IV(A) biosynthesis; lipid IV(A) from (3R)-3-hydroxytetradecanoyl-[acyl-carrier-protein] and UDP-N-acetyl-alpha-D-glucosamine: step 6/6. In terms of biological role, transfers the gamma-phosphate of ATP to the 4'-position of a tetraacyldisaccharide 1-phosphate intermediate (termed DS-1-P) to form tetraacyldisaccharide 1,4'-bis-phosphate (lipid IVA). The sequence is that of Tetraacyldisaccharide 4'-kinase from Xylella fastidiosa (strain M23).